A 349-amino-acid polypeptide reads, in one-letter code: Glycosyltransferase 8 domain-containing protein 2 (349 aa).

The Cytoplasmic segment spans residues 1–6; that stretch reads MALLRK. A helical; Signal-anchor for type II membrane protein membrane pass occupies residues 7–24; sequence INQVLLFLLIVTLCVILY. At 25–349 the chain is on the lumenal side; sequence KKVHKGTVSK…AGIFKLNHHS (325 aa). Residue asparagine 234 is glycosylated (N-linked (GlcNAc...) asparagine).

It belongs to the glycosyltransferase 8 family.

It localises to the membrane. This is Glycosyltransferase 8 domain-containing protein 2 (GLT8D2) from Macaca fascicularis (Crab-eating macaque).